The following is a 213-amino-acid chain: Adenylate kinase (213 aa).

10-15 (GAGKGT) lines the ATP pocket. Residues 30–59 (STGDMFRAAMANQTEMGVLAKSYIDKGDLV) are NMP. AMP contacts are provided by residues Thr31, Arg36, 57-59 (DLV), 86-89 (GYPR), and Gln93. An LID region spans residues 127–160 (GRIINKKTGETFHKIFNPPVGDYKEEDFYQREDD). Residues Arg128 and 137–138 (TF) contribute to the ATP site. Arg157 and Arg168 together coordinate AMP. Lys196 is a binding site for ATP.

This sequence belongs to the adenylate kinase family. As to quaternary structure, monomer.

The protein localises to the cytoplasm. The enzyme catalyses AMP + ATP = 2 ADP. The protein operates within purine metabolism; AMP biosynthesis via salvage pathway; AMP from ADP: step 1/1. Its function is as follows. Catalyzes the reversible transfer of the terminal phosphate group between ATP and AMP. Plays an important role in cellular energy homeostasis and in adenine nucleotide metabolism. The protein is Adenylate kinase of Streptococcus equi subsp. zooepidemicus (strain H70).